The primary structure comprises 306 residues: Glutaminase (306 aa).

7 residues coordinate substrate: Ser64, Asn115, Glu159, Asn166, Tyr190, Tyr242, and Val260.

The protein belongs to the glutaminase family. Homotetramer.

It carries out the reaction L-glutamine + H2O = L-glutamate + NH4(+). The sequence is that of Glutaminase from Vibrio atlanticus (strain LGP32) (Vibrio splendidus (strain Mel32)).